Consider the following 102-residue polypeptide: Cysteine-rich venom protein VAR9 (102 aa).

Residues Met1–Gly19 form the signal peptide. Positions Asn41–Lys80 constitute an SCP domain.

The protein belongs to the CRISP family. Post-translationally, contains 8 disulfide bonds. In terms of tissue distribution, expressed by the venom gland.

It localises to the secreted. Its function is as follows. Blocks ryanodine receptors, and potassium channels. The protein is Cysteine-rich venom protein VAR9 of Varanus varius (Lace monitor lizard).